The following is a 230-amino-acid chain: Orotidine 5'-phosphate decarboxylase (230 aa).

Substrate is bound by residues Asp-11, Lys-34, Asp-61–Thr-70, Thr-117, Arg-179, Gln-188, Gly-208, and Arg-209. Lys-63 acts as the Proton donor in catalysis.

Belongs to the OMP decarboxylase family. Type 1 subfamily. Homodimer.

The catalysed reaction is orotidine 5'-phosphate + H(+) = UMP + CO2. Its pathway is pyrimidine metabolism; UMP biosynthesis via de novo pathway; UMP from orotate: step 2/2. Its function is as follows. Catalyzes the decarboxylation of orotidine 5'-monophosphate (OMP) to uridine 5'-monophosphate (UMP). The chain is Orotidine 5'-phosphate decarboxylase from Streptococcus sanguinis (strain SK36).